We begin with the raw amino-acid sequence, 272 residues long: Golgi to ER traffic protein 5 (272 aa).

2 disordered regions span residues 1-35 (MSTV…HSGT) and 85-105 (LHAP…PGSS). In terms of domain architecture, Ubiquitin-like spans 108-198 (ITVHLKSARN…VEFGVMIIGG (91 aa)). The interval 212–231 (SAEQKESYEPPKPAVGPSGE) is disordered.

It belongs to the GET5 family. As to quaternary structure, forms homodimers via its C-terminal domain. Component of the get4/get5/sgt2 sorting complex. Binds directly sgt12 homodimers.

The protein localises to the cytoplasm. Its function is as follows. Component of the get4/get5/sgt2 sorting complex involved in the GET (guided entry of TA proteins) pathway that leads to the insertion of tail-anchored (TA) proteins into the endoplasmic reticulum. Get4 and get5 form an obligate complex that catalyzes the transfer of tail-anchored proteins destined to the endoplasmic reticulum from sgt2 to the cytosolic targeting factor which then targets the TA protein to the ER membrane via get1/get2. The polypeptide is Golgi to ER traffic protein 5 (Aspergillus fumigatus (strain ATCC MYA-4609 / CBS 101355 / FGSC A1100 / Af293) (Neosartorya fumigata)).